The primary structure comprises 309 residues: Fructosamine-3-kinase (309 aa).

Residue M1 is modified to N-acetylmethionine. 89–91 contacts ATP; sequence EHL. D217 functions as the Proton acceptor in the catalytic mechanism.

It belongs to the fructosamine kinase family. As to quaternary structure, monomer. Widely expressed. Expressed in erythrocytes.

The catalysed reaction is N(6)-(D-fructosyl)-L-lysyl-[protein] + ATP = N(6)-(3-O-phospho-D-fructosyl)-L-lysyl-[protein] + ADP + H(+). It catalyses the reaction N(6)-D-ribulosyl-L-lysyl-[protein] + ATP = N(6)-(3-O-phospho-D-ribulosyl)-L-lysyl-[protein] + ADP + H(+). It carries out the reaction N(6)-(D-psicosyl)-L-lysyl-[protein] + ATP = N(6)-(3-O-phospho-D-psicosyl)-L-lysyl-[protein] + ADP + H(+). Fructosamine-3-kinase involved in protein deglycation by mediating phosphorylation of fructoselysine residues on glycated proteins, to generate fructoselysine-3 phosphate. Fructoselysine-3 phosphate adducts are unstable and decompose under physiological conditions. Involved in intracellular deglycation in erythrocytes. Involved in the response to oxidative stress by mediating deglycation of NFE2L2/NRF2, glycation impairing NFE2L2/NRF2 function. Also able to phosphorylate psicosamines and ribulosamines. The polypeptide is Fructosamine-3-kinase (Homo sapiens (Human)).